The primary structure comprises 214 residues: Probable septum site-determining protein MinC (214 aa).

This sequence belongs to the MinC family. As to quaternary structure, interacts with MinD and FtsZ.

Functionally, cell division inhibitor that blocks the formation of polar Z ring septums. Rapidly oscillates between the poles of the cell to destabilize FtsZ filaments that have formed before they mature into polar Z rings. Prevents FtsZ polymerization. The polypeptide is Probable septum site-determining protein MinC (Caldanaerobacter subterraneus subsp. tengcongensis (strain DSM 15242 / JCM 11007 / NBRC 100824 / MB4) (Thermoanaerobacter tengcongensis)).